The following is a 265-amino-acid chain: 5'-nucleotidase SurE (265 aa).

A divalent metal cation contacts are provided by Asp-8, Asp-9, Ser-39, and Asn-96.

Belongs to the SurE nucleotidase family. A divalent metal cation serves as cofactor.

It localises to the cytoplasm. The enzyme catalyses a ribonucleoside 5'-phosphate + H2O = a ribonucleoside + phosphate. Nucleotidase that shows phosphatase activity on nucleoside 5'-monophosphates. The sequence is that of 5'-nucleotidase SurE from Rubrobacter xylanophilus (strain DSM 9941 / JCM 11954 / NBRC 16129 / PRD-1).